The following is a 131-amino-acid chain: Small ribosomal subunit protein uS11 (131 aa).

This sequence belongs to the universal ribosomal protein uS11 family. In terms of assembly, part of the 30S ribosomal subunit. Interacts with proteins S7 and S18. Binds to IF-3.

Its function is as follows. Located on the platform of the 30S subunit, it bridges several disparate RNA helices of the 16S rRNA. Forms part of the Shine-Dalgarno cleft in the 70S ribosome. The chain is Small ribosomal subunit protein uS11 from Syntrophotalea carbinolica (strain DSM 2380 / NBRC 103641 / GraBd1) (Pelobacter carbinolicus).